The primary structure comprises 185 residues: Crossover junction endodeoxyribonuclease RuvC (185 aa).

Active-site residues include D7, E68, and D141. Mg(2+)-binding residues include D7, E68, and D141.

The protein belongs to the RuvC family. Homodimer which binds Holliday junction (HJ) DNA. The HJ becomes 2-fold symmetrical on binding to RuvC with unstacked arms; it has a different conformation from HJ DNA in complex with RuvA. In the full resolvosome a probable DNA-RuvA(4)-RuvB(12)-RuvC(2) complex forms which resolves the HJ. Mg(2+) serves as cofactor.

It localises to the cytoplasm. It carries out the reaction Endonucleolytic cleavage at a junction such as a reciprocal single-stranded crossover between two homologous DNA duplexes (Holliday junction).. Functionally, the RuvA-RuvB-RuvC complex processes Holliday junction (HJ) DNA during genetic recombination and DNA repair. Endonuclease that resolves HJ intermediates. Cleaves cruciform DNA by making single-stranded nicks across the HJ at symmetrical positions within the homologous arms, yielding a 5'-phosphate and a 3'-hydroxyl group; requires a central core of homology in the junction. The consensus cleavage sequence is 5'-(A/T)TT(C/G)-3'. Cleavage occurs on the 3'-side of the TT dinucleotide at the point of strand exchange. HJ branch migration catalyzed by RuvA-RuvB allows RuvC to scan DNA until it finds its consensus sequence, where it cleaves and resolves the cruciform DNA. In Mycolicibacterium smegmatis (strain ATCC 700084 / mc(2)155) (Mycobacterium smegmatis), this protein is Crossover junction endodeoxyribonuclease RuvC.